The sequence spans 370 residues: MTTCRLFAGFCQAVTMSKYSQYFNKTLIQVHYLTAKEMTAEELRDRIESKQSLSSLNILFVVICSIIILENLLVLIAVFRNKKFHSAMFFFIGNLAFSDLLAGSAYIANIFLSGPRTFHLTPVQWFIREGTAFIALSASVFSLLAIAIERYIAITKVKVYGSNKTCRMFLLIGACWVMSILLGGLPIIGWNCINNLDDCSAVLPLNTRYYIRFVVTIFSIILLSIVILYVRIYLIVRTSHQEATNSPAYALLKTVTIVLGVFIICWLPAFTILLLDTSCKMKQCPILNNAGIFFSFATLNSALNPLIYTLRSKDMRKEFLRVLCCWGLLNCGRPPHRCMVPLKSSSSMEHCTNKHEHQSIPIMQDCTTCV.

The Extracellular portion of the chain corresponds to 1–57; that stretch reads MTTCRLFAGFCQAVTMSKYSQYFNKTLIQVHYLTAKEMTAEELRDRIESKQSLSSLN. A glycan (N-linked (GlcNAc...) asparagine) is linked at asparagine 24. The chain crosses the membrane as a helical span at residues 58-78; that stretch reads ILFVVICSIIILENLLVLIAV. At 79–87 the chain is on the cytoplasmic side; that stretch reads FRNKKFHSA. The helical transmembrane segment at 88-108 threads the bilayer; that stretch reads MFFFIGNLAFSDLLAGSAYIA. Residues 109-128 are Extracellular-facing; that stretch reads NIFLSGPRTFHLTPVQWFIR. Residues 129–149 form a helical membrane-spanning segment; that stretch reads EGTAFIALSASVFSLLAIAIE. Topologically, residues 150-167 are cytoplasmic; sequence RYIAITKVKVYGSNKTCR. The chain crosses the membrane as a helical span at residues 168–193; sequence MFLLIGACWVMSILLGGLPIIGWNCI. Residues 194 to 219 are Extracellular-facing; that stretch reads NNLDDCSAVLPLNTRYYIRFVVTIFS. Residues 220–230 traverse the membrane as a helical segment; it reads IILLSIVILYV. Residues 231-254 are Cytoplasmic-facing; sequence RIYLIVRTSHQEATNSPAYALLKT. A helical transmembrane segment spans residues 255–275; sequence VTIVLGVFIICWLPAFTILLL. The Extracellular segment spans residues 276 to 289; that stretch reads DTSCKMKQCPILNN. Residues 290–310 form a helical membrane-spanning segment; sequence AGIFFSFATLNSALNPLIYTL. Residues 311-370 lie on the Cytoplasmic side of the membrane; that stretch reads RSKDMRKEFLRVLCCWGLLNCGRPPHRCMVPLKSSSSMEHCTNKHEHQSIPIMQDCTTCV. Cysteine 325 carries S-palmitoyl cysteine lipidation.

Belongs to the G-protein coupled receptor 1 family.

The protein localises to the cell membrane. In terms of biological role, receptor for the lysosphingolipid sphingosine 1-phosphate (S1P). S1P receptor is critical for cell migration and epithelial integrity during vertebrate embryogenesis. Receptor for the chemokine-like protein FAM19A5. Mediates the inhibitory effect of FAM19A5 on vascular smooth muscle cell proliferation and migration. The protein is Sphingosine 1-phosphate receptor 2 (s1pr2) of Danio rerio (Zebrafish).